Reading from the N-terminus, the 188-residue chain is Phosphoribosylglycinamide formyltransferase (188 aa).

12 to 14 (GSN) contributes to the N(1)-(5-phospho-beta-D-ribosyl)glycinamide binding site. (6R)-10-formyltetrahydrofolate-binding positions include Lys-66, 91 to 94 (MRLI), and Asn-108. His-110 functions as the Proton donor in the catalytic mechanism.

It belongs to the GART family.

The enzyme catalyses N(1)-(5-phospho-beta-D-ribosyl)glycinamide + (6R)-10-formyltetrahydrofolate = N(2)-formyl-N(1)-(5-phospho-beta-D-ribosyl)glycinamide + (6S)-5,6,7,8-tetrahydrofolate + H(+). It participates in purine metabolism; IMP biosynthesis via de novo pathway; N(2)-formyl-N(1)-(5-phospho-D-ribosyl)glycinamide from N(1)-(5-phospho-D-ribosyl)glycinamide (10-formyl THF route): step 1/1. Catalyzes the transfer of a formyl group from 10-formyltetrahydrofolate to 5-phospho-ribosyl-glycinamide (GAR), producing 5-phospho-ribosyl-N-formylglycinamide (FGAR) and tetrahydrofolate. This chain is Phosphoribosylglycinamide formyltransferase, found in Staphylococcus aureus (strain COL).